We begin with the raw amino-acid sequence, 132 residues long: Large ribosomal subunit protein bL17 (132 aa).

It belongs to the bacterial ribosomal protein bL17 family. In terms of assembly, part of the 50S ribosomal subunit. Contacts protein L32.

This is Large ribosomal subunit protein bL17 from Saccharophagus degradans (strain 2-40 / ATCC 43961 / DSM 17024).